A 217-amino-acid chain; its full sequence is UPF0319 protein HS_1349 (217 aa).

Positions 1-21 are cleaved as a signal peptide; that stretch reads MKFSFAALASAMLLTSTAAFA.

The protein belongs to the UPF0319 family.

The sequence is that of UPF0319 protein HS_1349 from Histophilus somni (strain 129Pt) (Haemophilus somnus).